Reading from the N-terminus, the 338-residue chain is Fe(3+)-binding periplasmic protein (338 aa).

The signal sequence occupies residues 1 to 26 (MKLRISSLGPVALLASSMMLAFGAQA). Positions 40, 88, 224, and 225 each coordinate Fe cation.

It belongs to the bacterial solute-binding protein 1 family. In terms of assembly, the complex is composed of two ATP-binding proteins (FbpC), two transmembrane proteins (FbpB) and a solute-binding protein (FbpA).

The protein localises to the periplasm. Its function is as follows. Part of the ABC transporter complex FbpABC (TC 3.A.1.10.1) involved in Fe(3+) ions import. This protein specifically binds Fe(3+) and is involved in its transmembrane transport. The polypeptide is Fe(3+)-binding periplasmic protein (fbpA) (Serratia marcescens).